Reading from the N-terminus, the 825-residue chain is Thioredoxin domain-containing protein 16 (825 aa).

Positions 1 to 27 are cleaved as a signal peptide; that stretch reads MFSGFNVFRVGISFVIMCIFYMPTVNS. Residues 392 to 495 enclose the Thioredoxin domain; that stretch reads LTVELTEETF…EDLLKFIQLN (104 aa). C449 and C456 form a disulfide bridge. N460 carries an N-linked (GlcNAc...) asparagine glycan. The segment at 762–787 is disordered; that stretch reads RKVPKCMKETDVQENDKEQHEDKSAV. Over residues 767–787 the composition is skewed to basic and acidic residues; it reads CMKETDVQENDKEQHEDKSAV. The Mediates endoplasmic reticulum retention motif lies at 816 to 819; sequence DKEL.

Interacts with FOXRED2. Post-translationally, glycosylated.

Its subcellular location is the secreted. It is found in the endoplasmic reticulum lumen. This chain is Thioredoxin domain-containing protein 16, found in Homo sapiens (Human).